Here is a 1584-residue protein sequence, read N- to C-terminus: Dicer-like protein 1 (1584 aa).

The interval 31–60 (EDVVSDNDDRGNASDVESEDGVKRWTVNPE) is disordered. The region spanning 129-310 (LFERAKQQNT…RAAAELEALL (182 aa)) is the Helicase ATP-binding domain. An ATP-binding site is contributed by 142–149 (LDTGSGKT). The short motif at 255–258 (DEAH) is the DEAH box element. One can recognise a Helicase C-terminal domain in the interval 448–621 (KVIMLVRILR…EALPEDRKLT (174 aa)). Positions 654 to 744 (SLVCLANFTA…QSVFTKQLPE (91 aa)) constitute a Dicer dsRNA-binding fold domain. The region spanning 894–1028 (KALAYVSENE…LILEPMRISP (135 aa)) is the PAZ domain. 2 RNase III domains span residues 1052–1207 (VALD…LTGQ) and 1258–1424 (AKKF…VDSE). Residues Glu-1298, Asp-1410, and Glu-1413 each contribute to the Mg(2+) site. A DRBM domain is found at 1458–1545 (TFVANMMAHK…AKKAIKLLEG (88 aa)). Zn(2+) contacts are provided by Cys-1470, His-1516, Cys-1557, and Cys-1559.

Belongs to the helicase family. Dicer subfamily. Mg(2+) is required as a cofactor. Requires Mn(2+) as cofactor.

In terms of biological role, dicer-like endonuclease involved in cleaving double-stranded RNA in the RNA interference (RNAi) pathway. Produces 21 to 25 bp dsRNAs (siRNAs) which target the selective destruction of homologous RNAs leading to sequence-specific suppression of gene expression, called post-transcriptional gene silencing (PTGS). Part of a broad host defense response against viral infection and transposons. Controls the expression of the non-LTR retrotransposon Tad in the African strain, Adiomopoume. This chain is Dicer-like protein 1 (dcl-1), found in Neurospora crassa (strain ATCC 24698 / 74-OR23-1A / CBS 708.71 / DSM 1257 / FGSC 987).